The sequence spans 31 residues: IGALQGAVDRVLTQPTQSIVRNVAVVNSLYK.

The protein belongs to the COG5 family. In terms of assembly, component of the conserved oligomeric Golgi complex which is composed of eight different subunits and is required for normal Golgi morphology and localization.

The protein resides in the cytoplasm. It localises to the cytosol. Its subcellular location is the golgi apparatus membrane. Required for normal Golgi function. In Bos taurus (Bovine), this protein is Conserved oligomeric Golgi complex subunit 5 (COG5).